The following is a 570-amino-acid chain: CDKN2A-interacting protein (570 aa).

Ala2 bears the N-acetylalanine mark. Positions 19 to 126 (VETLRCEGET…KVKKRGISSS (108 aa)) constitute an XRN2-binding (XTBD) domain. Residues 122–345 (GISSSNEGVE…TSLLMPKSSS (224 aa)) are disordered. At Ser124 the chain carries Phosphoserine. Basic and acidic residues predominate over residues 147–162 (VERDHGKKSAKTDRSA). The span at 167–183 (SSGSKGSSTKSESSGTS) shows a compositional bias: low complexity. Lys176 is covalently cross-linked (Glycyl lysine isopeptide (Lys-Gly) (interchain with G-Cter in SUMO1)). A compositionally biased stretch (polar residues) spans 184–198 (ARSNSGVSHQNSSTS). Low complexity predominate over residues 203-221 (SVCSQSSSNSSQVTSAGSG). A compositionally biased stretch (basic and acidic residues) spans 224 to 233 (SEPEAPDKHG). Phosphoserine is present on Ser234. Composition is skewed to low complexity over residues 234–248 (SASF…SLNS) and 271–301 (SSVS…PLLS). Polar residues predominate over residues 302–317 (CKSSSETASSGLTTKA). Positions 318–345 (SSEANISSSVSKNSSSSGTSLLMPKSSS) are enriched in low complexity. Ser378 bears the Phosphoserine mark. The segment at 383–407 (SQLASKSSSQSSTSQLPSKSTSQSS) is disordered. In terms of domain architecture, DRBM spans 452 to 527 (NHGELLNAAI…SREALKLFLK (76 aa)).

The protein belongs to the CARF family. Interacts with CDKN2A/p14ARF, p53/TP53 and MDM2. Interacts with CHEK2 and MAPK3. Interacts with XRN2. In terms of processing, may be ubiquitinated.

It is found in the nucleus. Its subcellular location is the nucleoplasm. Functionally, regulates DNA damage response and cell proliferation in a dose-dependent manner through a number of signaling pathways involved in cell proliferation, apoptosis and senescence. This is CDKN2A-interacting protein (Cdkn2aip) from Rattus norvegicus (Rat).